The chain runs to 157 residues: Cytochrome P450 monooxygenase atG (157 aa).

A heme-binding site is contributed by cysteine 97.

The protein belongs to the cytochrome P450 family. Heme serves as cofactor.

It functions in the pathway secondary metabolite biosynthesis. Its function is as follows. Cytochrome P450 monooxygenase; part of the gene cluster that mediates the biosynthesis of terreic acid, a quinone epoxide inhibitor of Bruton's tyrosine kinase (BTK). The first step of the pathway is the synthesis of 6-methylsalicylic acid (6-MSA) by the 6-methylsalicylic acid synthase atX. In the biosynthesis of 6-MSA, atX utilizes one acetyl-CoA and three malonyl-CoAs as its substrates and catalyzes a series of programmed reactions including Claisen condensation, reduction, aldol cyclization, and the hydrolytic cleavage that yields 6-MSA. The 6-methylsalicylate 1-monooxygenase atA then catalyzes the decarboxylative hydroxylation of 6-MSA to 3-methylcatechol. The next step is the conversion of 3-methylcatechol to 3-methyl-1,2,4-benzenetriol by cytochrome P450 monooxygenase atE, which is enhanced by cytochrome P450 monooxygenase atG. Then, the epoxidase atD catalyzes the epoxidation and hydroxyl oxidation of 3-methyl-1,2,4-benzenetriol to terremutin. Lastly, GMC oxidoreductase atC oxidizes terremutin to terreic acid. The sequence is that of Cytochrome P450 monooxygenase atG from Aspergillus terreus (strain NIH 2624 / FGSC A1156).